The primary structure comprises 275 residues: Chlorophyll a-b binding protein 3, chloroplastic (275 aa).

W58 contributes to the chlorophyll b binding site. Chlorophyll a is bound by residues F78, S84, and E102. 4 residues coordinate chlorophyll b: R107, I142, E169, and R172. Chlorophyll a contacts are provided by K226, E227, N230, R232, Q244, and H259. Residues 233-253 (LAMLAILGYFIQGLVTGVGPY) form a helical membrane-spanning segment.

This sequence belongs to the light-harvesting chlorophyll a/b-binding (LHC) protein family. The LHC complex consists of chlorophyll a-b binding proteins. The cofactor is Binds at least 14 chlorophylls (8 Chl-a and 6 Chl-b) and carotenoids such as lutein and neoxanthin.. In terms of processing, photoregulated by reversible phosphorylation of its threonine residues.

It localises to the plastid. The protein resides in the chloroplast thylakoid membrane. Its function is as follows. The light-harvesting complex (LHC) functions as a light receptor, it captures and delivers excitation energy to photosystems with which it is closely associated. May channel protons produced in the catalytic Mn center of water oxidation into the thylakoid lumen. The chain is Chlorophyll a-b binding protein 3, chloroplastic from Pisum sativum (Garden pea).